Here is a 287-residue protein sequence, read N- to C-terminus: MTNKEKLLQKIPELLNEVKSKNPLTHCITNFVTVNDCANAVLAIGASPIMSEDIEEVAEVVSIADALVINIGKLSHEQVEAMKISSAQANKINTPVILDPVGVGISQLRNKVTLEIIENYKLAAIRGNITEIKTIAKLTGIISESNTAKGVDVSESDIITQDNLNENADVISKLAAKLDTVILASGPIDILSDGETTIAIDNGDEMMPYITGSGCMLSSIVGSCIGATNPLEGTMVAALLMTIAGEKARSKVDSENAGTGSFRAYLIDYLYKLDGQTLINKSNIEIL.

A substrate-binding site is contributed by methionine 50. Arginine 126 and serine 185 together coordinate ATP. Glycine 212 is a binding site for substrate.

Belongs to the Thz kinase family. The cofactor is Mg(2+).

It catalyses the reaction 5-(2-hydroxyethyl)-4-methylthiazole + ATP = 4-methyl-5-(2-phosphooxyethyl)-thiazole + ADP + H(+). Its pathway is cofactor biosynthesis; thiamine diphosphate biosynthesis; 4-methyl-5-(2-phosphoethyl)-thiazole from 5-(2-hydroxyethyl)-4-methylthiazole: step 1/1. Its function is as follows. Catalyzes the phosphorylation of the hydroxyl group of 4-methyl-5-beta-hydroxyethylthiazole (THZ). In Methanobrevibacter smithii (strain ATCC 35061 / DSM 861 / OCM 144 / PS), this protein is Hydroxyethylthiazole kinase.